The sequence spans 194 residues: Probable nicotinate-nucleotide adenylyltransferase (194 aa).

Belongs to the NadD family.

The enzyme catalyses nicotinate beta-D-ribonucleotide + ATP + H(+) = deamido-NAD(+) + diphosphate. It participates in cofactor biosynthesis; NAD(+) biosynthesis; deamido-NAD(+) from nicotinate D-ribonucleotide: step 1/1. In terms of biological role, catalyzes the reversible adenylation of nicotinate mononucleotide (NaMN) to nicotinic acid adenine dinucleotide (NaAD). The protein is Probable nicotinate-nucleotide adenylyltransferase of Chlorobium luteolum (strain DSM 273 / BCRC 81028 / 2530) (Pelodictyon luteolum).